A 318-amino-acid chain; its full sequence is Aspartate carbamoyltransferase catalytic subunit (318 aa).

2 residues coordinate carbamoyl phosphate: Arg58 and Thr59. Position 86 (Lys86) interacts with L-aspartate. Carbamoyl phosphate contacts are provided by Arg108, His141, and Gln144. L-aspartate-binding residues include Arg174 and Arg226. Positions 270 and 271 each coordinate carbamoyl phosphate.

Belongs to the aspartate/ornithine carbamoyltransferase superfamily. ATCase family. As to quaternary structure, heterododecamer (2C3:3R2) of six catalytic PyrB chains organized as two trimers (C3), and six regulatory PyrI chains organized as three dimers (R2).

It catalyses the reaction carbamoyl phosphate + L-aspartate = N-carbamoyl-L-aspartate + phosphate + H(+). It functions in the pathway pyrimidine metabolism; UMP biosynthesis via de novo pathway; (S)-dihydroorotate from bicarbonate: step 2/3. Functionally, catalyzes the condensation of carbamoyl phosphate and aspartate to form carbamoyl aspartate and inorganic phosphate, the committed step in the de novo pyrimidine nucleotide biosynthesis pathway. This chain is Aspartate carbamoyltransferase catalytic subunit, found in Lactobacillus gasseri (strain ATCC 33323 / DSM 20243 / BCRC 14619 / CIP 102991 / JCM 1131 / KCTC 3163 / NCIMB 11718 / NCTC 13722 / AM63).